A 183-amino-acid polypeptide reads, in one-letter code: Shikimate kinase (183 aa).

19-24 (GAGKTT) contacts ATP. Threonine 23 serves as a coordination point for Mg(2+). Substrate-binding residues include aspartate 41, arginine 65, and glycine 87. Arginine 124 is an ATP binding site. Arginine 143 serves as a coordination point for substrate.

It belongs to the shikimate kinase family. As to quaternary structure, monomer. It depends on Mg(2+) as a cofactor.

It is found in the cytoplasm. It carries out the reaction shikimate + ATP = 3-phosphoshikimate + ADP + H(+). It participates in metabolic intermediate biosynthesis; chorismate biosynthesis; chorismate from D-erythrose 4-phosphate and phosphoenolpyruvate: step 5/7. Functionally, catalyzes the specific phosphorylation of the 3-hydroxyl group of shikimic acid using ATP as a cosubstrate. This Thermosynechococcus vestitus (strain NIES-2133 / IAM M-273 / BP-1) protein is Shikimate kinase.